Here is a 229-residue protein sequence, read N- to C-terminus: MEKKKVFIPFLYLISIVFLPWWIYLSFQKSLESWVTTWWNTKQSETFLNDIQEKKLLEKFIELEELRLLDEMIKEYPETQLQKLGIGIHNETIQLIKMHNEDCIHMILHFSTNLICFLILGGYSILGNKELILLNSWVQEFLYNLSDTIKAFSILLVTDLCIGFHSPQGWELLIESIYKDFGFADNDQIISSLVSTFPVILDTILKYWIFRSLNRVSPSLVVIYHSMND.

4 helical membrane passes run 7–27, 106–126, 154–174, and 189–209; these read FIPFLYLISIVFLPWWIYLSF, MILHFSTNLICFLILGGYSIL, ILLVTDLCIGFHSPQGWELLI, and IISSLVSTFPVILDTILKYWI.

This sequence belongs to the CemA family.

Its subcellular location is the plastid. It is found in the chloroplast inner membrane. The catalysed reaction is K(+)(in) + H(+)(out) = K(+)(out) + H(+)(in). In terms of biological role, contributes to K(+)/H(+) antiport activity by supporting proton efflux to control proton extrusion and homeostasis in chloroplasts in a light-dependent manner to modulate photosynthesis. Prevents excessive induction of non-photochemical quenching (NPQ) under continuous-light conditions. Indirectly promotes efficient inorganic carbon uptake into chloroplasts. In Spinacia oleracea (Spinach), this protein is Potassium/proton antiporter CemA.